The sequence spans 117 residues: UPF0122 protein Dred_2057 (117 aa).

This sequence belongs to the UPF0122 family.

In terms of biological role, might take part in the signal recognition particle (SRP) pathway. This is inferred from the conservation of its genetic proximity to ftsY/ffh. May be a regulatory protein. The polypeptide is UPF0122 protein Dred_2057 (Desulforamulus reducens (strain ATCC BAA-1160 / DSM 100696 / MI-1) (Desulfotomaculum reducens)).